Consider the following 105-residue polypeptide: Keratin-associated protein 17-1 (105 aa).

Interacts with hair keratins.

Its function is as follows. In the hair cortex, hair keratin intermediate filaments are embedded in an interfilamentous matrix, consisting of hair keratin-associated proteins (KRTAP), which are essential for the formation of a rigid and resistant hair shaft through their extensive disulfide bond cross-linking with abundant cysteine residues of hair keratins. The matrix proteins include the high-sulfur and high-glycine-tyrosine keratins. The polypeptide is Keratin-associated protein 17-1 (KRTAP17-1) (Homo sapiens (Human)).